The chain runs to 128 residues: Modulator protein MzrA (128 aa).

The Cytoplasmic portion of the chain corresponds to 1–13 (MLALLRPYLSTRV). The helical transmembrane segment at 14–34 (LCVLVVCFSALMLVAFIPTLF) threads the bilayer. Over 35-128 (RNDTALQIRA…RLSLRKQSVG (94 aa)) the chain is Periplasmic.

This sequence belongs to the MzrA family. As to quaternary structure, interacts with EnvZ.

The protein resides in the cell inner membrane. Functionally, modulates the activity of the EnvZ/OmpR two-component regulatory system, probably by directly modulating EnvZ enzymatic activity and increasing stability of phosphorylated OmpR. The protein is Modulator protein MzrA of Erwinia billingiae (strain Eb661).